We begin with the raw amino-acid sequence, 478 residues long: Divinyl ether synthase CYP74D3 (478 aa).

Residue cysteine 432 coordinates heme.

It belongs to the cytochrome P450 family. 9-divinyl ether synthase subfamily. As to expression, not detected in leaves, stems or roots of healthy plants.

It localises to the cytoplasm. The protein localises to the cytosol. It catalyses the reaction (9S)-hydroperoxy-(10E,12Z)-octadecadienoate = colneleate + H2O. The catalysed reaction is (9S)-hydroperoxy-(10E,12Z,15Z)-octadecatrienoate = colnelenate + H2O. Functionally, strictly inducible cytochrome P450 involved in the biosynthesis of the anti-fungal toxins colneleate and colnelenate. Can use (9S)-hydroperoxy-(10E,12Z)-octadecadienoate (9-HPOD) and (9S)-hydroperoxy-(10E,12Z,15Z)-octadecatrienoate (9-HPOT) as substrates, but has a very low activity with the corresponding 13-hydroperoxides (13-HPOD and 13-POT). The sequence is that of Divinyl ether synthase CYP74D3 from Nicotiana tabacum (Common tobacco).